The following is a 279-amino-acid chain: Zinc-finger homeodomain protein 1 (279 aa).

The segment covering 1-30 (MEFEDNNNNNDEEQEEDMNLHEEEEDDDAV) has biased composition (acidic residues). Residues 1 to 62 (MEFEDNNNNN…TTSTGGGGGF (62 aa)) are disordered. The segment at 75–124 (FRECLKNQAVNIGGHAVDGCGEFMPAGIEGTIDALKCAACGCHRNFHRKE) adopts a ZF-HD dimerization-type zinc-finger fold. 2 disordered regions span residues 128 to 199 (FHHA…TKFT) and 245 to 279 (NNKHTLGKSPSPLHHHQAPPPPPPQSSFHHEQDQP). Over residues 134-143 (QHQPPPPPPG) the composition is skewed to pro residues. A DNA-binding region (homeobox; atypical) is located at residues 191 to 254 (RKRHRTKFTA…NNKHTLGKSP (64 aa)).

As to quaternary structure, homo- and heterodimer with other ZFHD proteins. Interacts with MIF1 and MIF2; these interactions prevent nuclear localization and DNA-binding to inhibit transcription regulation activity. Binds to ZHD2, ZHD3, ZHD4, ZHD5, ZHD6, ZHD7, ZHD8, ZHD9, ZHD10 and ZHD11. In terms of tissue distribution, mostly expressed in flowers and inflorescence.

It localises to the nucleus. Functionally, putative transcription factor. This is Zinc-finger homeodomain protein 1 (ZHD1) from Arabidopsis thaliana (Mouse-ear cress).